A 4588-amino-acid polypeptide reads, in one-letter code: Protocadherin Fat 1 (4588 aa).

The signal sequence occupies residues 1 to 21 (MGRHLALLLLLLLLFQHFGDS). Over 22–4181 (DGSQRLEQTP…STPWNIGLAE (4160 aa)) the chain is Extracellular. 2 consecutive Cadherin domains span residues 35 to 149 (THLE…RPLF) and 150 to 257 (SPTS…APVI). N-linked (GlcNAc...) asparagine glycosylation is present at Asn40. N-linked (GlcNAc...) asparagine glycosylation occurs at Asn333. Cadherin domains are found at residues 368 to 463 (EKDV…PPEF), 464 to 569 (TQTA…TPLF), 570 to 673 (EKIN…VNLQ), 718 to 822 (STLP…PPEF), 823 to 927 (LQES…PPTF), 928 to 1034 (IPPN…PPVF), 1035 to 1139 (SSFV…APQT), 1140 to 1245 (SEPV…KPQF), 1246 to 1357 (LQKF…EPIS), 1359 to 1456 (EESF…RPQF), 1457 to 1562 (STSK…APWF), 1563 to 1667 (TASS…SPKF), 1668 to 1765 (TSKE…APVF), 1766 to 1879 (MQAE…PPVF), 1880 to 1979 (AKPL…HLKF), 1980 to 2081 (TQDV…APVF), 2082 to 2182 (VNLP…MPVF), 2183 to 2283 (EKPF…PPVF), 2284 to 2390 (AQQS…PPLF), 2391 to 2492 (EQQI…SPAF), 2493 to 2596 (LQNE…APQF), 2597 to 2703 (RATK…LPKF), 2704 to 2809 (SEPF…SPVF), 2810 to 2918 (ESSP…PPRF), 2919 to 3023 (TAEI…SPVC), 3024 to 3125 (EKTL…APEF), 3126 to 3230 (SADP…PPVF), 3231 to 3335 (EYRE…TPVF), 3336 to 3440 (SQDT…APVF), 3441 to 3545 (SRGN…PPAI), and 3546 to 3647 (LPLE…AIRF). Asn660, Asn740, and Asn791 each carry an N-linked (GlcNAc...) asparagine glycan. An N-linked (GlcNAc...) asparagine glycan is attached at Asn998. 2 N-linked (GlcNAc...) asparagine glycosylation sites follow: Asn1426 and Asn1551. Residues Asn1748, Asn1864, Asn1902, Asn1940, and Asn1991 are each glycosylated (N-linked (GlcNAc...) asparagine). N-linked (GlcNAc...) asparagine glycans are attached at residues Asn2325 and Asn2464. N-linked (GlcNAc...) asparagine glycosylation is found at Asn3324, Asn3422, Asn3444, Asn3613, Asn3640, and Asn3716. The EGF-like 1 domain maps to 3790–3827 (VHHGCEDDPCPEGSECVSDPWEEKHTCVCPSGRFGQCP). 15 disulfide bridges follow: Cys3794–Cys3805, Cys3799–Cys3816, Cys3818–Cys3826, Cys3976–Cys4009, Cys4017–Cys4028, Cys4022–Cys4038, Cys4040–Cys4049, Cys4056–Cys4067, Cys4061–Cys4076, Cys4078–Cys4087, Cys4093–Cys4104, Cys4098–Cys4113, Cys4115–Cys4124, Cys4131–Cys4142, and Cys4136–Cys4151. The Laminin G-like domain maps to 3829–4009 (SSSMTLTGNS…EESVDVSPGC (181 aa)). 3 EGF-like domains span residues 4013–4050 (ATEDCASNPCQNGGVCNPSPAGGYYCKCSALYIGTHCE), 4052–4088 (SVNPCSSKPCLYGGTCVVDNGGFVCQCRGLYTGQRCQ), and 4089–4125 (LSPYCKDEPCKNGGTCFDSLDGAVCQCDSGFRGERCQ). Residues 4127–4163 (DIDECSGNPCLHGALCENTHGSYHCNCSHEYRGRHCE) enclose the EGF-like 5; calcium-binding domain. Residue Asn4152 is glycosylated (N-linked (GlcNAc...) asparagine). The cysteines at positions 4153 and 4162 are disulfide-linked. Residues 4182–4202 (GIGIVVFVAGIFLLVVVFVLC) form a helical membrane-spanning segment. At 4203 to 4588 (RKMISRKKKH…PLDSQQHTEV (386 aa)) the chain is on the cytoplasmic side. A Nuclear localization signal motif is present at residues 4204–4214 (KMISRKKKHQA). 3 disordered regions span residues 4255–4275 (SYTPSIPSDSRNNLDRNSFEG), 4303–4327 (SVAPNLPPPPPSNSPSDSDSIQKPS), and 4343–4376 (LSKKPLEEKPSQPYSARESLSEVQSLSSFQSESC). Positions 4256-4265 (YTPSIPSDSR) are enriched in polar residues. A compositionally biased stretch (polar residues) spans 4363-4374 (SEVQSLSSFQSE). A PTB-like motif motif is present at residues 4378–4382 (DNGYH). Disordered stretches follow at residues 4435–4479 (FPPP…SSSR) and 4565–4588 (ESGDDGHFEEVTIPPLDSQQHTEV).

As to quaternary structure, interacts (via the C-terminus 4300-4400 AA) with ATN1. Interacts with RERE. In terms of processing, undergoes proteolytic cleavage. The extracellular domain is cleaved off and the cytoplasmic domain (about 400 AA) shuttles to the nucleus. Expressed in many epithelial and some endothelial and smooth muscle cells.

It is found in the cell membrane. Its subcellular location is the nucleus. In terms of biological role, plays an essential role for cellular polarization, directed cell migration and modulating cell-cell contact. The polypeptide is Protocadherin Fat 1 (FAT1) (Homo sapiens (Human)).